A 376-amino-acid polypeptide reads, in one-letter code: Putative F-box protein At2g33200 (376 aa).

The 48-residue stretch at tyrosine 6–arginine 53 folds into the F-box domain.

The chain is Putative F-box protein At2g33200 from Arabidopsis thaliana (Mouse-ear cress).